The following is a 191-amino-acid chain: UPF0228 protein MM_1428 (191 aa).

It belongs to the UPF0228 family.

The sequence is that of UPF0228 protein MM_1428 from Methanosarcina mazei (strain ATCC BAA-159 / DSM 3647 / Goe1 / Go1 / JCM 11833 / OCM 88) (Methanosarcina frisia).